Here is a 670-residue protein sequence, read N- to C-terminus: Probable leucine-rich repeat receptor-like protein kinase At1g68400 (670 aa).

A signal peptide spans Met1–Ser29. Topologically, residues Thr30–Thr274 are extracellular. 5 N-linked (GlcNAc...) asparagine glycosylation sites follow: Asn52, Asn79, Asn102, Asn109, and Asn112. LRR repeat units follow at residues Arg69–Thr91, Ser92–Thr114, Ala115–Leu137, Arg139–Thr162, His163–Asp185, and Leu186–Phe207. N-linked (GlcNAc...) asparagine glycosylation is found at Asn149, Asn182, and Asn190. The tract at residues Ser230–Ser266 is disordered. Over residues Val253–Ser266 the composition is skewed to polar residues. N-linked (GlcNAc...) asparagine glycosylation occurs at Asn268. The chain crosses the membrane as a helical span at residues Ile275 to Leu295. Over Tyr296–Gln670 the chain is Cytoplasmic. The Protein kinase domain occupies Arg362–Ile636. Ser364 is subject to Phosphoserine. ATP is bound by residues Leu368–Ala376 and Lys390. Ser443 is modified (phosphoserine). Residue Thr463 is modified to Phosphothreonine. Catalysis depends on Asp491, which acts as the Proton acceptor. Position 616 is a phosphothreonine (Thr616).

The protein belongs to the protein kinase superfamily. Ser/Thr protein kinase family.

It localises to the cell membrane. The catalysed reaction is L-seryl-[protein] + ATP = O-phospho-L-seryl-[protein] + ADP + H(+). It carries out the reaction L-threonyl-[protein] + ATP = O-phospho-L-threonyl-[protein] + ADP + H(+). The protein is Probable leucine-rich repeat receptor-like protein kinase At1g68400 of Arabidopsis thaliana (Mouse-ear cress).